The chain runs to 478 residues: Growth/differentiation factor 10 (478 aa).

Positions 1-33 (MAHVPARTSPGPGPQLLLLLLPLFLLLLRDVAG) are cleaved as a signal peptide. A propeptide spanning residues 34–368 (SHRAPAWSAL…EKTMQKARRK (335 aa)) is cleaved from the precursor. Residues Asn-118, Asn-156, and Asn-281 are each glycosylated (N-linked (GlcNAc...) asparagine). The interval 266 to 319 (YDPFPAGDPEPRAAPNNSADPRVRRAAQATGPLQDNELPGLDERPPRAHAQHFH) is disordered. 3 disulfide bridges follow: Cys-376–Cys-443, Cys-405–Cys-475, and Cys-409–Cys-477. Residue Asn-469 is glycosylated (N-linked (GlcNAc...) asparagine).

Belongs to the TGF-beta family. Homodimer or heterodimer. Can form a non-covalent complex of the mature region and the pro-region. As to expression, expressed in femur, brain, lung, skeletal muscle, pancreas and testis.

The protein localises to the secreted. In terms of biological role, growth factor involved in osteogenesis and adipogenesis. Plays an inhibitory role in the process of osteoblast differentiation via SMAD2/3 pathway. Plays an inhibitory role in the process of adipogenesis. The chain is Growth/differentiation factor 10 from Homo sapiens (Human).